The chain runs to 107 residues: Nucleoid-associated protein GOX0603 (107 aa).

It belongs to the YbaB/EbfC family. Homodimer.

The protein resides in the cytoplasm. It is found in the nucleoid. In terms of biological role, binds to DNA and alters its conformation. May be involved in regulation of gene expression, nucleoid organization and DNA protection. This is Nucleoid-associated protein GOX0603 from Gluconobacter oxydans (strain 621H) (Gluconobacter suboxydans).